Consider the following 196-residue polypeptide: Glycerol-3-phosphate acyltransferase (196 aa).

The next 6 membrane-spanning stretches (helical) occupy residues 5–25, 53–73, 80–100, 107–127, 130–150, and 153–173; these read VYLL…IIFC, FSAL…VLLA, PSEI…PLFF, GVAT…AAGL, WLIV…TALI, and FYIW…CCLL.

It belongs to the PlsY family. In terms of assembly, probably interacts with PlsX.

The protein localises to the cell inner membrane. The enzyme catalyses an acyl phosphate + sn-glycerol 3-phosphate = a 1-acyl-sn-glycero-3-phosphate + phosphate. Its pathway is lipid metabolism; phospholipid metabolism. Its function is as follows. Catalyzes the transfer of an acyl group from acyl-phosphate (acyl-PO(4)) to glycerol-3-phosphate (G3P) to form lysophosphatidic acid (LPA). This enzyme utilizes acyl-phosphate as fatty acyl donor, but not acyl-CoA or acyl-ACP. This Actinobacillus pleuropneumoniae serotype 7 (strain AP76) protein is Glycerol-3-phosphate acyltransferase.